A 195-amino-acid chain; its full sequence is MRRPKSSHVRMEPVAPRSHNTMPMLDQFRSNHPETSKIEGVSSLDTALKVFWNNQREQLGNFAGQTHLPLSRVRKILKSDPEVKKISCDVPALFSKACEYFILEVTLRAWMHTQSCTRETIRRCDIFQAVKNSGTYDFLIDRVPFGPHCVTHQGVQPPAEMILPDMNVPIDMDQIEEENMMEERSVGFDLNCDLQ.

Residues 1-24 (MRRPKSSHVRMEPVAPRSHNTMPM) form a disordered region.

The protein belongs to the NFYC/HAP5 subunit family. As to quaternary structure, heterotrimeric transcription factor composed of three components, NF-YA, NF-YB and NF-YC. NF-YB and NF-YC must interact and dimerize for NF-YA association and DNA binding.

It localises to the nucleus. Functionally, stimulates the transcription of various genes by recognizing and binding to a CCAAT motif in promoters. This Arabidopsis thaliana (Mouse-ear cress) protein is Nuclear transcription factor Y subunit C-10 (NFYC10).